Here is a 315-residue protein sequence, read N- to C-terminus: MLSVNELALDIFEELFEYAEELHAVPHELDNGARIVDCGVSTSGGYLTGRRFTEICMGGLGEVDISMGKIRDFPIPFIEVSTDFPSIACLGAQKAGWTVNVNKYFAMGSGPARALSLKPKHTYEVIEYEDEFDYAVICLESDHLPNAAVMENIAEACNVDVANTCAVVAPTASLVGSIQVAGRCVETAVYKLNELGFDTKKITAGIGHAPIAPVKKDGTKAMGSTNDATIYHGSIMLTMNAPEIKDYLDKIPSNKSKGYGKPFYDIFKEANFDFYQIDTSLFSPAEVVINELSEGKVYHVGAVNPEVTLKSFGFI.

The protein belongs to the MCH family.

It is found in the cytoplasm. It catalyses the reaction 5,10-methenyl-5,6,7,8-tetrahydromethanopterin + H2O = N(5)-formyl-5,6,7,8-tetrahydromethanopterin + H(+). The protein operates within one-carbon metabolism; methanogenesis from CO(2); 5,10-methenyl-5,6,7,8-tetrahydromethanopterin from CO(2): step 3/3. In terms of biological role, catalyzes the reversible interconversion of 5-formyl-H(4)MPT to methenyl-H(4)MPT(+). In Methanoculleus marisnigri (strain ATCC 35101 / DSM 1498 / JR1), this protein is Methenyltetrahydromethanopterin cyclohydrolase.